A 279-amino-acid chain; its full sequence is Acyl-coenzyme A thioesterase MBLAC2 (279 aa).

Serine 2 is subject to N-acetylserine. The Zn(2+) site is built by histidine 83, histidine 85, aspartate 87, histidine 88, histidine 170, aspartate 189, and histidine 231. A lipid anchor (S-palmitoyl cysteine) is attached at cysteine 254.

This sequence belongs to the metallo-beta-lactamase superfamily. Glyoxalase II family. The cofactor is Zn(2+). In terms of processing, palmitoylated on Cys-254 by ZDHHC20.

It localises to the endoplasmic reticulum membrane. The protein resides in the cell membrane. It carries out the reaction hexadecanoyl-CoA + H2O = hexadecanoate + CoA + H(+). The enzyme catalyses dodecanoyl-CoA + H2O = dodecanoate + CoA + H(+). The catalysed reaction is tetradecanoyl-CoA + H2O = tetradecanoate + CoA + H(+). It catalyses the reaction octadecanoyl-CoA + H2O = octadecanoate + CoA + H(+). It carries out the reaction a beta-lactam + H2O = a substituted beta-amino acid. Its function is as follows. Acyl-CoA thioesterases are a group of enzymes that catalyze the hydrolysis of acyl-CoAs to the free fatty acid and coenzyme A (CoASH), providing the potential to regulate intracellular levels of acyl-CoAs, free fatty acids and CoASH. Has an acyl-CoA thioesterase activity towards the long chain fatty acyl-CoA thioester palmitoyl-CoA (hexadecanoyl-CoA; C16:0-CoA). Displays a substrate preference for fatty acyl-CoAs with chain-lengths C12-C18. The sequence is that of Acyl-coenzyme A thioesterase MBLAC2 (MBLAC2) from Bos taurus (Bovine).